A 458-amino-acid polypeptide reads, in one-letter code: Transcription factor bHLH10 (458 aa).

The interval 1 to 49 (MEEERESLYEEMGCFDPNTPAEVTVESSFSQAEPPPPPPQVLVAGSTSN) is disordered. Positions 243–292 (SRKSRTSPTERERRVHFNDRFFDLKNLIPNPTKIDRASIVGEAIDYIKEL) constitute a bHLH domain. The interval 315–338 (KRARVGEGGGGEDQEEEEDTVNYK) is disordered. Acidic residues predominate over residues 324–334 (GGEDQEEEEDT).

As to quaternary structure, homodimer.

It localises to the nucleus. The sequence is that of Transcription factor bHLH10 (BHLH10) from Arabidopsis thaliana (Mouse-ear cress).